Here is a 132-residue protein sequence, read N- to C-terminus: Small ribosomal subunit protein uS11 (132 aa).

The protein belongs to the universal ribosomal protein uS11 family. As to quaternary structure, part of the 30S ribosomal subunit.

Functionally, located on the platform of the 30S subunit. This chain is Small ribosomal subunit protein uS11, found in Thermoplasma volcanium (strain ATCC 51530 / DSM 4299 / JCM 9571 / NBRC 15438 / GSS1).